The chain runs to 385 residues: A-type ATP synthase subunit C (385 aa).

It belongs to the V-ATPase V0D/AC39 subunit family. As to quaternary structure, has multiple subunits with at least A(3), B(3), C, D, E, F, H, I and proteolipid K(x).

It localises to the cell membrane. Its function is as follows. Component of the A-type ATP synthase that produces ATP from ADP in the presence of a proton gradient across the membrane. The polypeptide is A-type ATP synthase subunit C (Methanothermobacter thermautotrophicus (strain ATCC 29096 / DSM 1053 / JCM 10044 / NBRC 100330 / Delta H) (Methanobacterium thermoautotrophicum)).